We begin with the raw amino-acid sequence, 373 residues long: GTPase Obg (373 aa).

Residues 1 to 159 form the Obg domain; that stretch reads MKFIDEARIE…RMVRLELKVL (159 aa). Positions 128–147 are disordered; that stretch reads LHFKSSTNRAPRQKTDGKPG. The OBG-type G domain maps to 160–334; sequence ADVGLLGMPN…LCYAVFDHIS (175 aa). Residues 166–173, 191–195, 213–216, 284–287, and 315–317 each bind GTP; these read GMPNAGKS, FTTLA, DIPG, NKLD, and SAL. 2 residues coordinate Mg(2+): serine 173 and threonine 193. Residues 354 to 373 form a disordered region; that stretch reads FREKPQAPAAADDAGTDPQV. Positions 359 to 373 are enriched in low complexity; that stretch reads QAPAAADDAGTDPQV.

Belongs to the TRAFAC class OBG-HflX-like GTPase superfamily. OBG GTPase family. As to quaternary structure, monomer. The cofactor is Mg(2+).

Its subcellular location is the cytoplasm. Its function is as follows. An essential GTPase which binds GTP, GDP and possibly (p)ppGpp with moderate affinity, with high nucleotide exchange rates and a fairly low GTP hydrolysis rate. Plays a role in control of the cell cycle, stress response, ribosome biogenesis and in those bacteria that undergo differentiation, in morphogenesis control. This is GTPase Obg from Paraburkholderia phytofirmans (strain DSM 17436 / LMG 22146 / PsJN) (Burkholderia phytofirmans).